An 801-amino-acid chain; its full sequence is Bromodomain-containing protein 2 (801 aa).

Met1 carries the post-translational modification N-acetylmethionine. Thr6 bears the Phosphothreonine mark. Ser37 is subject to Phosphoserine. Residues 53-73 are disordered; that stretch reads ALQLTPANPPPPEVSNPKKPG. The Bromo 1 domain maps to 74-180; that stretch reads RVTNQLQYLH…KIFLQKVASM (107 aa). 6 residues coordinate a protein: Asp112, Tyr155, Asn156, Lys157, Asp160, and Asp161. Disordered stretches follow at residues 268 to 349, 456 to 647, and 737 to 801; these read PPAQ…LSEQ, EPLE…YDEK, and EKRL…SDSG. The span at 285 to 298 shows a compositional bias: low complexity; the sequence is TTTPTPTAILAPGS. 3 positions are modified to phosphoserine: Ser298, Ser301, and Ser305. Residues 316–332 show a composition bias toward basic and acidic residues; it reads MRRESGRPIKPPRKDLP. Residues 344 to 453 form the Bromo 2 domain; sequence GKLSEQLKHC…DVFEFRYAKM (110 aa). Acidic residues predominate over residues 481 to 514; that stretch reads SSEESSSESSSEEEEEEDEEDEEEEESESSDSEE. Residues 544–566 are compositionally biased toward basic residues; it reads KPKRKREKKEKKKKRKAEKHRGR. The short motif at 555–559 is the Nuclear localization signal element; the sequence is KKKRK. Gly residues predominate over residues 592-612; that stretch reads GSGGGSAALGPSGFGPSGGSG. An NET domain is found at 632 to 714; the sequence is DSEEEEESRP…SCLRKKPRKP (83 aa). Position 633 is a phosphoserine (Ser633). Low complexity predominate over residues 763–795; it reads SSSAQQVAVSRLSASSSSSDSSSSSSSSSSSDT.

The protein belongs to the BET family. As to quaternary structure, homodimer. Interacts with E2F1. Interacts with (acetylated) STAT3; promoting STAT3 recruitment to chromatin. Interacts with CTCF; promoting BRD2 recruitment to chromatin. In terms of assembly, (Microbial infection) Interacts with herpes virus 8 protein LANA1.

Its subcellular location is the nucleus. It localises to the chromosome. Its activity is regulated as follows. Inhibited by JQ1, a thieno-triazolo-1,4-diazepine derivative, which specifically inhibits members of the BET family (BRD2, BRD3 and BRD4). The first bromo domain is inhibited by GSK778 (iBET-BD1), which specifically inhibits the first bromo domain of members of the BET family (BRD2, BRD3 and BRD4). The second bromo domain is inhibited by ABBV-744, which specifically inhibits the second bromo domain of members of the BET family (BRD2, BRD3 and BRD4). The second bromo domain is inhibited by GSK046 (iBET-BD2), which specifically inhibits the second bromo domain of members of the BET family (BRD2, BRD3 and BRD4). In terms of biological role, chromatin reader protein that specifically recognizes and binds histone H4 acetylated at 'Lys-5' and 'Lys-12' (H4K5ac and H4K12ac, respectively), thereby controlling gene expression and remodeling chromatin structures. Recruits transcription factors and coactivators to target gene sites, and activates RNA polymerase II machinery for transcriptional elongation. Plays a key role in genome compartmentalization via its association with CTCF and cohesin: recruited to chromatin by CTCF and promotes formation of topologically associating domains (TADs) via its ability to bind acetylated histones, contributing to CTCF boundary formation and enhancer insulation. Also recognizes and binds acetylated non-histone proteins, such as STAT3. Involved in inflammatory response by regulating differentiation of naive CD4(+) T-cells into T-helper Th17: recognizes and binds STAT3 acetylated at 'Lys-87', promoting STAT3 recruitment to chromatin. In addition to acetylated lysines, also recognizes and binds lysine residues on histones that are both methylated and acetylated on the same side chain to form N6-acetyl-N6-methyllysine (Kacme), an epigenetic mark of active chromatin associated with increased transcriptional initiation. Specifically binds histone H4 acetyl-methylated at 'Lys-5' and 'Lys-12' (H4K5acme and H4K12acme, respectively). This chain is Bromodomain-containing protein 2, found in Homo sapiens (Human).